The sequence spans 115 residues: Disintegrin EC6 subunit alpha (115 aa).

An N-terminal signal peptide occupies residues 1-20; the sequence is MIQVLLVIICLAVFPYQGSS. Positions 21-47 are excised as a propeptide; the sequence is IILESGNINDYEIVYPKKVAVLPTGAM. Positions 48–112 constitute a Disintegrin domain; it reads NSVHPCCDPV…DCPRNRYKGK (65 aa). Intrachain disulfides connect Cys53-Cys76, Cys67-Cys73, Cys72-Cys97, and Cys85-Cys104. Positions 89 to 91 match the Cell attachment site; atypical (MLD) motif; the sequence is MLD.

This sequence belongs to the disintegrin family. Dimeric disintegrin subfamily. Heterodimer with subunit beta; disulfide-linked. As to expression, expressed by the venom gland.

It localises to the secreted. In terms of biological role, potently inhibits adhesion of alpha-4/beta-1 (ITGA4/ITGB1) and alpha-9/beta-1 (ITGA9/ITGB1) integrins to VCAM1, and adhesion of alpha-5/beta-1 (ITGA5/ITGB1) integrin to fibronectin. Has a much less effect on alpha-IIb/beta-3 (ITGA2B/ITGB3) integrin. Also potently inhibits neutrophil migration across TNF-alpha-activated human umbilical endothelial cells. The protein is Disintegrin EC6 subunit alpha of Echis carinatus sochureki (Saw-scaled viper).